Here is a 348-residue protein sequence, read N- to C-terminus: 3'-dehydrocarminate deglycosidase alpha subunit (348 aa).

Mg(2+) is bound at residue E145. H147 acts as the Proton acceptor in catalysis. Mg(2+) is bound by residues D177, H275, and E311.

The protein belongs to the C-glycoside deglycosidase alpha subunit family. In terms of assembly, heterodimer composed of an alpha subunit (CarB) and a beta subunit (CarC). The cofactor is Mg(2+).

The catalysed reaction is 3'-dehydrocarminate + H(+) = kermesate + 1,5-anhydro-D-erythro-hex-1-en-3-ulose. Its activity is regulated as follows. Activity is strongly reduced in the presence of chelating agents. Functionally, carbon-carbon bond-cleaving enzyme which participates in a carminate degradation pathway. Cleaves the C-C bond in 3'-dehydrocarminate to form kermesate. Also shows weak activity with other C-glycosides, such as 3''-dehydropuerarin (3''-oxo-puerarin), 3''-dehydroisoorientin (3''-oxo-homoorientin) and 3'-dehydromangiferin (3'-oxo-mangiferin). The polypeptide is 3'-dehydrocarminate deglycosidase alpha subunit (Microbacterium sp).